A 499-amino-acid polypeptide reads, in one-letter code: Phenylalanine--tRNA ligase alpha subunit (499 aa).

Residues threonine 333, 372 to 374 (QIE), and tyrosine 412 contribute to the L-phenylalanine site. Position 414 (glutamate 414) interacts with Mg(2+). Residue phenylalanine 436 coordinates L-phenylalanine.

This sequence belongs to the class-II aminoacyl-tRNA synthetase family. Phe-tRNA synthetase alpha subunit type 2 subfamily. Tetramer of two alpha and two beta subunits. It depends on Mg(2+) as a cofactor.

Its subcellular location is the cytoplasm. The enzyme catalyses tRNA(Phe) + L-phenylalanine + ATP = L-phenylalanyl-tRNA(Phe) + AMP + diphosphate + H(+). The sequence is that of Phenylalanine--tRNA ligase alpha subunit from Thermoplasma acidophilum (strain ATCC 25905 / DSM 1728 / JCM 9062 / NBRC 15155 / AMRC-C165).